We begin with the raw amino-acid sequence, 414 residues long: NFATC2-interacting protein (414 aa).

A disordered region spans residues 1–42; it reads MAEPLRRRGPRSRGGRASRGARRARAARGRCPRAPRSPTRLI. Basic residues predominate over residues 7 to 33; it reads RRGPRSRGGRASRGARRARAARGRCPR. A phosphoserine mark is found at Ser52 and Ser54. Residues 63–118 form a disordered region; the sequence is ADPGEVPVARLPAPAAPEQDSDSDSEGAAEGPAGAPRTLVRRRRRLLDPGEAPVVP. The segment covering 68–79 has biased composition (low complexity); the sequence is VPVARLPAPAAP. Residues Ser83, Ser85, and Ser87 each carry the phosphoserine modification. Residues 90 to 100 show a composition bias toward low complexity; the sequence is AAEGPAGAPRT. A Phosphoserine modification is found at Ser121. Residue Lys123 forms a Glycyl lysine isopeptide (Lys-Gly) (interchain with G-Cter in SUMO2) linkage. The tract at residues 139 to 208 is disordered; sequence KLCPSEPEDE…SSRNKSRKHT (70 aa). The stretch at 170-229 forms a coiled coil; it reads KKKLRKKHEKEEKKMEEFPDQDISPLPQPSSRNKSRKHTEALQKLREVNKRLQDLRSCLS. Phosphoserine occurs at positions 193, 199, and 309. 2 positions are modified to phosphothreonine: Thr311 and Thr313. The Ubiquitin-like domain occupies 343–414; it reads LRLRVQGKEK…ESGDLIEVWG (72 aa). Phosphoserine occurs at positions 364 and 385.

In terms of assembly, interacts with NFATC2, TRAF1, TRAF2 and PRMT1. Interacts with UBE2I/UBC9. Post-translationally, methylation at the N-terminus by PRMT1 modulates interaction with the NFAT complex and results in augmented cytokine production.

It is found in the nucleus. The protein localises to the cytoplasm. In T-helper 2 (Th2) cells, regulates the magnitude of NFAT-driven transcription of a specific subset of cytokine genes, including IL3, IL4, IL5 and IL13, but not IL2. Recruits PRMT1 to the IL4 promoter; this leads to enhancement of histone H4 'Arg-3'-methylation and facilitates subsequent histone acetylation at the IL4 locus, thus promotes robust cytokine expression. Down-regulates formation of poly-SUMO chains by UBE2I/UBC9. The sequence is that of NFATC2-interacting protein (Nfatc2ip) from Rattus norvegicus (Rat).